A 640-amino-acid chain; its full sequence is Chaperone protein HtpG (640 aa).

The tract at residues 1 to 343 (MQTAENIEHL…SSDLPLNVSR (343 aa)) is a; substrate-binding. A b region spans residues 344 to 564 (EILQESKDID…THDVSGNLGR (221 aa)). The interval 565–640 (LLKSAGQKVP…LLLQNILSGK (76 aa)) is c.

It belongs to the heat shock protein 90 family. In terms of assembly, homodimer.

It is found in the cytoplasm. Functionally, molecular chaperone. Has ATPase activity. This chain is Chaperone protein HtpG, found in Nitrosomonas europaea (strain ATCC 19718 / CIP 103999 / KCTC 2705 / NBRC 14298).